The primary structure comprises 382 residues: D-galactonate dehydratase (382 aa).

D183 contributes to the Mg(2+) binding site. Residue H185 is the Proton donor of the active site. The Mg(2+) site is built by E209 and E235. H285 functions as the Proton acceptor in the catalytic mechanism. The segment at 361 to 382 (NENPPDWRNPVWRHSDGSIAEW) is disordered.

Belongs to the mandelate racemase/muconate lactonizing enzyme family. GalD subfamily. It depends on Mg(2+) as a cofactor.

It carries out the reaction D-galactonate = 2-dehydro-3-deoxy-D-galactonate + H2O. The protein operates within carbohydrate acid metabolism; D-galactonate degradation; D-glyceraldehyde 3-phosphate and pyruvate from D-galactonate: step 1/3. In terms of biological role, catalyzes the dehydration of D-galactonate to 2-keto-3-deoxy-D-galactonate. This is D-galactonate dehydratase from Xanthomonas axonopodis pv. citri (strain 306).